The primary structure comprises 318 residues: Olfactory receptor 13C7 (318 aa).

Residues 1–27 (MVSANQTASVTEFILLGLSAHPKLEKT) are Extracellular-facing. A helical transmembrane segment spans residues 28–48 (FFVLILLMYLVILLGNGVLIL). Over 49-61 (MTVSNSHLHMPMY) the chain is Cytoplasmic. Residues 62-82 (FFLGNLSFLDICYTTSSVPLI) form a helical membrane-spanning segment. Topologically, residues 83–100 (LDSFLTPRKTISFSACAV) are extracellular. Residues 101-121 (QMFLSFAMGATECVLLSMMAF) traverse the membrane as a helical segment. Over 122–181 (DRYVAICNPLRYPVVMSKAAYMPKAAGSWVAGSTASMVQTSLAMRLPFCGDNIINHFTCE) the chain is Cytoplasmic. The helical transmembrane segment at 182–202 (ILAVLKLACADISVNVISMGV) threads the bilayer. Residues 203-205 (TNV) are Extracellular-facing. The helical transmembrane segment at 206-226 (IFLGVPVLFISFSYVFIIATI) threads the bilayer. The Cytoplasmic segment spans residues 227–238 (LRIPSAEGRKKA). Residues 239–259 (FSTCSAHLTVVVIFYGTILFM) traverse the membrane as a helical segment. Over 260-278 (YGKPKSKDPLGADKQDLAD) the chain is Extracellular. Residues 279 to 289 (KLISLFYGVVT) form a helical membrane-spanning segment. Residues 290-318 (PMLNPIIYSLRNKDVKAAVRDLIFQKCFA) lie on the Cytoplasmic side of the membrane.

The protein belongs to the G-protein coupled receptor 1 family.

Its subcellular location is the cell membrane. Its function is as follows. Odorant receptor. The sequence is that of Olfactory receptor 13C7 from Homo sapiens (Human).